Reading from the N-terminus, the 385-residue chain is 8-amino-7-oxononanoate synthase (385 aa).

Residue Arg-21 participates in substrate binding. 108–109 serves as a coordination point for pyridoxal 5'-phosphate; the sequence is GF. His-133 contacts substrate. Residues Ser-179, His-207, and Thr-233 each coordinate pyridoxal 5'-phosphate. The residue at position 236 (Lys-236) is an N6-(pyridoxal phosphate)lysine. Thr-352 contacts substrate.

The protein belongs to the class-II pyridoxal-phosphate-dependent aminotransferase family. BioF subfamily. In terms of assembly, homodimer. Requires pyridoxal 5'-phosphate as cofactor.

It catalyses the reaction 6-carboxyhexanoyl-[ACP] + L-alanine + H(+) = (8S)-8-amino-7-oxononanoate + holo-[ACP] + CO2. The protein operates within cofactor biosynthesis; biotin biosynthesis. Catalyzes the decarboxylative condensation of pimeloyl-[acyl-carrier protein] and L-alanine to produce 8-amino-7-oxononanoate (AON), [acyl-carrier protein], and carbon dioxide. In Salmonella dublin (strain CT_02021853), this protein is 8-amino-7-oxononanoate synthase.